We begin with the raw amino-acid sequence, 309 residues long: Dicarboxylate carrier UCP2 (309 aa).

Residues 1–16 (MVGFKATDVPPTATVK) are Mitochondrial intermembrane-facing. Solcar repeat units follow at residues 11–106 (PTAT…VKQF), 114–203 (AGIG…IKDT), and 212–297 (DDLP…LKRA). Residues 16–63 (KFLGAGTAACIADLITFPLDTAKVRLQIQGERQGPMQAAASAQYRGVL) are important for interaction with long-chain fatty acids. Residues 17–40 (FLGAGTAACIADLITFPLDTAKVR) traverse the membrane as a helical segment. Residues 41 to 77 (LQIQGERQGPMQAAASAQYRGVLGTILTMVRTEGPRS) lie on the Mitochondrial matrix side of the membrane. A helical membrane pass occupies residues 78 to 103 (LYSGLVAGLQRQMSFASVRIGLYDSV). Topologically, residues 104-119 (KQFYTKGSEHAGIGSR) are mitochondrial intermembrane. The helical transmembrane segment at 120–145 (LLAGSTTGALAVAVAQPTDVVKVRFQ) threads the bilayer. Residues 146–173 (AQARAGAGRRYQSTVEAYKTIAREEGFR) lie on the Mitochondrial matrix side of the membrane. A helical transmembrane segment spans residues 174–199 (GLWKGTSPNVARNAIVNCAELVTYDL). The Mitochondrial intermembrane segment spans residues 200-217 (IKDTLLKAHLMTDDLPCH). Residues 218–242 (FTSAFGAGFCTTVIASPVDVVKTRY) form a helical membrane-spanning segment. Residues 243–268 (MNSALGQYSSAGHCALTMLQKEGPQA) are Mitochondrial matrix-facing. A helical transmembrane segment spans residues 269–294 (FYKGFMPSFLRLGSWNVVMFVTYEQL). Positions 278–285 (LRLGSWNV) are important for interaction with long-chain fatty acids. The Mitochondrial intermembrane portion of the chain corresponds to 295 to 309 (KRALMAARASREAPF).

The protein belongs to the mitochondrial carrier (TC 2.A.29) family. As to quaternary structure, homotetramer. Adopts an asymmetrical dimer of dimers functional form. Interacts with MICU1 (when methylated); leading to decrease the calcium sensitivity of MICU1.

The protein resides in the mitochondrion inner membrane. The catalysed reaction is L-aspartate(out) + phosphate(in) + H(+)(in) = L-aspartate(in) + phosphate(out) + H(+)(out). It carries out the reaction oxaloacetate(out) + phosphate(in) + H(+)(in) = oxaloacetate(in) + phosphate(out) + H(+)(out). The enzyme catalyses (S)-malate(out) + phosphate(in) + H(+)(in) = (S)-malate(in) + phosphate(out) + H(+)(out). It catalyses the reaction malonate(out) + phosphate(in) + H(+)(in) = malonate(in) + phosphate(out) + H(+)(out). The catalysed reaction is sulfate(out) + phosphate(in) + H(+)(in) = sulfate(in) + phosphate(out) + H(+)(out). It carries out the reaction (S)-malate(out) = (S)-malate(in). The enzyme catalyses L-aspartate(out) = L-aspartate(in). It catalyses the reaction phosphate(in) = phosphate(out). The catalysed reaction is chloride(in) = chloride(out). It carries out the reaction H(+)(in) = H(+)(out). The enzyme catalyses a long-chain fatty acid(out) = a long-chain fatty acid(in). In terms of biological role, antiporter that exports dicarboxylate intermediates of the Krebs cycle in exchange for phosphate plus a proton across the inner membrane of mitochondria, a process driven by mitochondrial motive force with an overall impact on glycolysis, glutaminolysis and glutathione-dependent redox balance. Continuous export of oxaloacetate and related four-carbon dicarboxylates from mitochondrial matrix into the cytosol negatively regulates the oxidation of acetyl-CoA substrates via the Krebs cycle lowering the ATP/ADP ratio and reactive oxygen species (ROS) production. May mediate inducible proton entry into the mitochondrial matrix affecting ATP turnover as a protection mechanism against oxidative stress. The proton currents are most likely associated with fatty acid flipping across the inner membrane of mitochondria in a metabolic process regulated by free fatty acids and purine nucleotides. Regulates the use of glucose as a source of energy. Required for glucose-induced DRP1-dependent mitochondrial fission and neuron activation in the ventromedial nucleus of the hypothalamus (VMH). This mitochondrial adaptation mechanism modulates the VMH pool of glucose-excited neurons with an impact on systemic glucose homeostasis. Regulates ROS levels and metabolic reprogramming of macrophages during the resolution phase of inflammation. Attenuates ROS production in response to IL33 to preserve the integrity of the Krebs cycle required for persistent production of itaconate and subsequent GATA3-dependent differentiation of inflammation-resolving alternatively activated macrophages. Can unidirectionally transport anions including L-malate, L-aspartate, phosphate and chloride ions. Does not mediate adaptive thermogenesis. The chain is Dicarboxylate carrier UCP2 (UCP2) from Bos taurus (Bovine).